Here is a 186-residue protein sequence, read N- to C-terminus: Shikimate kinase (186 aa).

Residue 21–26 (GVGKTT) coordinates ATP. Thr25 is a binding site for Mg(2+). 3 residues coordinate substrate: Asp43, Arg67, and Gly90. Arg129 serves as a coordination point for ATP. Arg147 serves as a coordination point for substrate.

Belongs to the shikimate kinase family. Monomer. It depends on Mg(2+) as a cofactor.

The protein localises to the cytoplasm. The enzyme catalyses shikimate + ATP = 3-phosphoshikimate + ADP + H(+). The protein operates within metabolic intermediate biosynthesis; chorismate biosynthesis; chorismate from D-erythrose 4-phosphate and phosphoenolpyruvate: step 5/7. Functionally, catalyzes the specific phosphorylation of the 3-hydroxyl group of shikimic acid using ATP as a cosubstrate. The chain is Shikimate kinase from Bacillus subtilis (strain 168).